The following is a 261-amino-acid chain: tRNA pseudouridine synthase A (261 aa).

The active-site Nucleophile is the Asp51. Tyr109 lines the substrate pocket.

Belongs to the tRNA pseudouridine synthase TruA family. In terms of assembly, homodimer.

The catalysed reaction is uridine(38/39/40) in tRNA = pseudouridine(38/39/40) in tRNA. Formation of pseudouridine at positions 38, 39 and 40 in the anticodon stem and loop of transfer RNAs. The protein is tRNA pseudouridine synthase A of Shewanella sp. (strain W3-18-1).